We begin with the raw amino-acid sequence, 409 residues long: Potassium channel subfamily K member 3 (409 aa).

The Cytoplasmic segment spans residues methionine 1–threonine 8. Residues leucine 9–leucine 29 traverse the membrane as a helical segment. An N-linked (GlcNAc...) asparagine glycan is attached at asparagine 53. Positions tryptophan 78–proline 101 form an intramembrane region, pore-forming. Residues valine 108–leucine 128 form a helical membrane-spanning segment. The Cytoplasmic portion of the chain corresponds to glycine 129–asparagine 158. Residues methionine 159–serine 179 traverse the membrane as a helical segment. An intramembrane region (pore-forming) is located at residues tryptophan 184–alanine 207. The helical transmembrane segment at phenylalanine 223–valine 243 threads the bilayer. Residues leucine 244–valine 409 are Cytoplasmic-facing.

Belongs to the two pore domain potassium channel (TC 1.A.1.8) family. As to quaternary structure, homodimer. Heterodimer with KCNK1. Heterodimer with KCNK9. In terms of tissue distribution, very strong expression in heart, also detected in kidney, brain, skin, testis, lung, skeletal muscle, small intestine and stomach. Not detected in liver, thymus or spleen. Expressed in adrenal glands mainly in zona glomerulosa and zona fasciculata of the cortex. Expressed at higher levels in brown and beige than in white adipocytes.

The protein resides in the cell membrane. It catalyses the reaction K(+)(in) = K(+)(out). The enzyme catalyses Na(+)(in) = Na(+)(out). With respect to regulation, activated by halothane and isoflurane. Inhibited by external acidification, diacylglycerol and anandamide. Inactivated by barium. Its function is as follows. K(+) channel that conducts voltage-dependent outward rectifying currents upon membrane depolarization. Voltage sensing is coupled to K(+) electrochemical gradient in an 'ion flux gating' mode where outward but not inward ion flow opens the gate. Changes ion selectivity and becomes permeable to Na(+) ions in response to extracellular acidification. Protonation of the pH sensor His-98 stabilizes C-type inactivation conformation likely converting the channel from outward K(+)-conducting, to inward Na(+)-conducting to nonconductive state. Homo- and heterodimerizes to form functional channels with distinct regulatory and gating properties. Allows K(+) currents with fast-gating kinetics important for the repolarization and hyperpolarization phases of action potentials. In cerebellar granule cells, heteromeric KCNK3:KCNK9 channel may hyperpolarize the resting membrane potential to limit intrinsic neuronal excitability, but once the action potential threshold is reached, it may support high-frequency action potential firing and increased neuronal excitability. Dispensable for central chemosensory respiration i.e. breathing controlled by brainstem CO2/pH, it rather conducts pH-sensitive currents and controls the firing rate of serotonergic raphe neurons involved in potentiation of the respiratory chemoreflex. Additionally, imparts chemosensitivity to type 1 cells in carotid bodies which respond to a decrease in arterial oxygen pressure or an increase in carbon dioxide pressure or pH to initiate adaptive changes in pulmonary ventilation. In adrenal gland, contributes to the maintenance of a hyperpolarized resting membrane potential of aldosterone-producing cells at zona glomerulosa and limits aldosterone release as part of a regulatory mechanism that controls arterial blood pressure and electrolyte homeostasis. In brown adipocytes, mediates K(+) efflux that counteracts norepinephrine-induced membrane depolarization, limits Ca(2+) efflux and downstream cAMP and PKA signaling, ultimately attenuating lipid oxidation and adaptive thermogenesis. This chain is Potassium channel subfamily K member 3, found in Mus musculus (Mouse).